A 776-amino-acid chain; its full sequence is LPS-assembly protein LptD (776 aa).

The first 24 residues, 1 to 24 (MQHFSRTFLAASIATALFAPYAQA), serve as a signal peptide directing secretion.

It belongs to the LptD family. Component of the lipopolysaccharide transport and assembly complex. Interacts with LptE and LptA.

It is found in the cell outer membrane. Its function is as follows. Together with LptE, is involved in the assembly of lipopolysaccharide (LPS) at the surface of the outer membrane. The protein is LPS-assembly protein LptD of Vibrio vulnificus (strain YJ016).